The following is a 142-amino-acid chain: Peptide methionine sulfoxide reductase MsrB (142 aa).

The region spanning K3–F126 is the MsrB domain. C115 functions as the Nucleophile in the catalytic mechanism.

It belongs to the MsrB Met sulfoxide reductase family.

The catalysed reaction is L-methionyl-[protein] + [thioredoxin]-disulfide + H2O = L-methionyl-(R)-S-oxide-[protein] + [thioredoxin]-dithiol. This chain is Peptide methionine sulfoxide reductase MsrB, found in Lactococcus lactis subsp. cremoris (strain MG1363).